The sequence spans 309 residues: Probable ABC transporter permease protein YesP (309 aa).

6 helical membrane passes run 29–49 (FIIG…FLSF), 84–104 (FTYV…IAVI), 114–134 (IYRT…VAIM), 167–187 (ALWT…LIFL), 217–237 (LPIL…SAFM), and 275–295 (YASA…LILF). In terms of domain architecture, ABC transmembrane type-1 spans 80–294 (LKVTFTYVLA…VIVGLITLIL (215 aa)).

Belongs to the binding-protein-dependent transport system permease family. MalFG subfamily.

The protein resides in the cell membrane. Functionally, part of a binding-protein-dependent transport system. Probably responsible for the translocation of the substrate across the membrane. This Bacillus subtilis (strain 168) protein is Probable ABC transporter permease protein YesP (yesP).